A 263-amino-acid polypeptide reads, in one-letter code: Sulfur carrier protein FdhD (263 aa).

Cysteine 107 (cysteine persulfide intermediate) is an active-site residue.

It belongs to the FdhD family.

The protein localises to the cytoplasm. In terms of biological role, required for formate dehydrogenase (FDH) activity. Acts as a sulfur carrier protein that transfers sulfur from IscS to the molybdenum cofactor prior to its insertion into FDH. In Bacillus licheniformis (strain ATCC 14580 / DSM 13 / JCM 2505 / CCUG 7422 / NBRC 12200 / NCIMB 9375 / NCTC 10341 / NRRL NRS-1264 / Gibson 46), this protein is Sulfur carrier protein FdhD.